The chain runs to 316 residues: UPF0725 protein At1g02770 (316 aa).

The protein belongs to the UPF0725 (EMB2204) family.

In Arabidopsis thaliana (Mouse-ear cress), this protein is UPF0725 protein At1g02770.